A 352-amino-acid polypeptide reads, in one-letter code: Protein-glutamate methylesterase/protein-glutamine glutaminase 1 (352 aa).

Residues 5–122 (KVLVVDDSAF…SLDVLSVKEE (118 aa)) enclose the Response regulatory domain. Asp56 is modified (4-aspartylphosphate). The 198-residue stretch at 155 to 352 (PDQDRKLNKL…EITEEVLSML (198 aa)) folds into the CheB-type methylesterase domain. Active-site residues include Ser170, His197, and Asp297.

The protein belongs to the CheB family. Phosphorylated by CheA. Phosphorylation of the N-terminal regulatory domain activates the methylesterase activity.

The protein resides in the cytoplasm. The enzyme catalyses [protein]-L-glutamate 5-O-methyl ester + H2O = L-glutamyl-[protein] + methanol + H(+). It carries out the reaction L-glutaminyl-[protein] + H2O = L-glutamyl-[protein] + NH4(+). Its function is as follows. Involved in chemotaxis. Part of a chemotaxis signal transduction system that modulates chemotaxis in response to various stimuli. Catalyzes the demethylation of specific methylglutamate residues introduced into the chemoreceptors (methyl-accepting chemotaxis proteins or MCP) by CheR. Also mediates the irreversible deamidation of specific glutamine residues to glutamic acid. This is Protein-glutamate methylesterase/protein-glutamine glutaminase 1 from Syntrophomonas wolfei subsp. wolfei (strain DSM 2245B / Goettingen).